An 87-amino-acid chain; its full sequence is UPF0335 protein RL4065 (87 aa).

Belongs to the UPF0335 family.

This Rhizobium johnstonii (strain DSM 114642 / LMG 32736 / 3841) (Rhizobium leguminosarum bv. viciae) protein is UPF0335 protein RL4065.